The following is a 601-amino-acid chain: Probable N-acetylgalactosaminyltransferase 7 (601 aa).

Topologically, residues 1-20 (MIIARKKLQLQRLWRQRGCR) are cytoplasmic. The chain crosses the membrane as a helical; Signal-anchor for type II membrane protein span at residues 21–38 (VATYICLGVLVLFGFVYN). The Lumenal portion of the chain corresponds to 39–601 (SKGNSMSSIK…FVWKEFYQSS (563 aa)). The interval 61–108 (DLTNKELPGGPDPNTIFRGSELGNYEPKEPEIPSNQPGEHGKPVPVTD) is disordered. N-linked (GlcNAc...) asparagine glycosylation is present at N135. Disulfide bonds link C146/C382, C373/C452, C490/C506, C529/C542, and C568/C583. Residues 155 to 265 (LPTVSVVVVF…TNWLPPLLAP (111 aa)) are catalytic subdomain A. Substrate contacts are provided by D196 and R226. Mn(2+) is bound by residues D249 and H251. Residues 328 to 390 (PFRSPTHAGG…PCSHVGHVYR (63 aa)) form a catalytic subdomain B region. Substrate is bound at residue W359. H387 is a binding site for Mn(2+). Residues R390 and Y395 each coordinate substrate. The 119-residue stretch at 477 to 595 (DVWGEARNPA…DNERQKFVWK (119 aa)) folds into the Ricin B-type lectin domain.

This sequence belongs to the glycosyltransferase 2 family. GalNAc-T subfamily. It depends on Mn(2+) as a cofactor.

The protein localises to the golgi apparatus membrane. It functions in the pathway protein modification; protein glycosylation. Its function is as follows. Probable glycopeptide transferase involved in O-linked oligosaccharide biosynthesis. Glycopeptide transferases catalyze the transfer of an N-acetyl-D-galactosamine residue to an already glycosylated peptide. In contrast to other members of the family, it does not act as a peptide transferase that transfers GalNAc onto serine or threonine residue on peptides that have been tested. Some peptide transferase activity is however not excluded, considering that its appropriate peptide substrate may remain unidentified. This chain is Probable N-acetylgalactosaminyltransferase 7 (gly-7), found in Caenorhabditis elegans.